The primary structure comprises 111 residues: Universal stress protein B (111 aa).

Helical transmembrane passes span 1-21 (MFSTIALFWALCLVCIINMMR) and 90-110 (FILTSSLSGLVVICLISMLIW).

Belongs to the universal stress protein B family.

Its subcellular location is the cell inner membrane. The protein is Universal stress protein B of Photorhabdus laumondii subsp. laumondii (strain DSM 15139 / CIP 105565 / TT01) (Photorhabdus luminescens subsp. laumondii).